We begin with the raw amino-acid sequence, 369 residues long: Chaperone protein DnaJ (369 aa).

The region spanning 4-69 (SYYEILEVEK…KKRALYDRYG (66 aa)) is the J domain. The CR-type zinc-finger motif lies at 130–207 (GCKKTIKVQY…CKGKTYILKD (78 aa)). 8 residues coordinate Zn(2+): C143, C146, C159, C162, C181, C184, C195, and C198. CXXCXGXG motif repeat units lie at residues 143–150 (CESCDGTG), 159–166 (CKQCNGQG), 181–188 (CGACQGKG), and 195–202 (CQACKGKT).

Belongs to the DnaJ family. As to quaternary structure, homodimer. Zn(2+) is required as a cofactor.

The protein resides in the cytoplasm. Functionally, participates actively in the response to hyperosmotic and heat shock by preventing the aggregation of stress-denatured proteins and by disaggregating proteins, also in an autonomous, DnaK-independent fashion. Unfolded proteins bind initially to DnaJ; upon interaction with the DnaJ-bound protein, DnaK hydrolyzes its bound ATP, resulting in the formation of a stable complex. GrpE releases ADP from DnaK; ATP binding to DnaK triggers the release of the substrate protein, thus completing the reaction cycle. Several rounds of ATP-dependent interactions between DnaJ, DnaK and GrpE are required for fully efficient folding. Also involved, together with DnaK and GrpE, in the DNA replication of plasmids through activation of initiation proteins. The sequence is that of Chaperone protein DnaJ from Helicobacter pylori (strain ATCC 700392 / 26695) (Campylobacter pylori).